The chain runs to 160 residues: Ribonuclease P protein component 2 (160 aa).

This sequence belongs to the eukaryotic/archaeal RNase P protein component 2 family. As to quaternary structure, consists of a catalytic RNA component and at least 4-5 protein subunits.

The protein localises to the cytoplasm. The catalysed reaction is Endonucleolytic cleavage of RNA, removing 5'-extranucleotides from tRNA precursor.. Part of ribonuclease P, a protein complex that generates mature tRNA molecules by cleaving their 5'-ends. The sequence is that of Ribonuclease P protein component 2 from Methanosphaerula palustris (strain ATCC BAA-1556 / DSM 19958 / E1-9c).